Here is a 206-residue protein sequence, read N- to C-terminus: dCTP deaminase, dUMP-forming (206 aa).

DCTP is bound by residues 117–122 (RSSFGR), aspartate 135, 143–145 (TLE), glutamine 163, tyrosine 177, lysine 184, and glutamine 188. Residue glutamate 145 is the Proton donor/acceptor of the active site.

The protein belongs to the dCTP deaminase family. Homotrimer.

It catalyses the reaction dCTP + 2 H2O = dUMP + NH4(+) + diphosphate. The protein operates within pyrimidine metabolism; dUMP biosynthesis; dUMP from dCTP: step 1/1. In terms of biological role, bifunctional enzyme that catalyzes both the deamination of dCTP to dUTP and the hydrolysis of dUTP to dUMP without releasing the toxic dUTP intermediate. The protein is dCTP deaminase, dUMP-forming of Methanococcus maripaludis (strain C6 / ATCC BAA-1332).